The primary structure comprises 1150 residues: Solute carrier family 12 member 6 (1150 aa).

The segment at methionine 1 to glycine 108 is disordered. The Cytoplasmic segment spans residues methionine 1–leucine 135. Residues leucine 28–phenylalanine 45 show a composition bias toward low complexity. Phosphoserine is present on serine 32. The segment covering aspartate 80–histidine 101 has biased composition (polar residues). Serine 120 bears the Phosphoserine mark. A discontinuously helical transmembrane segment spans residues phenylalanine 136–asparagine 158. 2 residues coordinate K(+): serine 147 and serine 148. At serine 148 the chain carries Phosphoserine. Residue asparagine 151 coordinates chloride. The Extracellular segment spans residues leucine 159–glutamate 165. The tract at residues glutamine 161–lysine 181 is disordered. A compositionally biased stretch (basic and acidic residues) spans alanine 163–lysine 177. Residues histidine 166 to phenylalanine 188 traverse the membrane as a helical segment. At methionine 189 to valine 211 the chain is on the cytoplasmic side. Residues valine 212–glycine 245 form a helical membrane-spanning segment. At valine 246–glutamate 263 the chain is on the extracellular side. The next 2 helical transmembrane spans lie at phenylalanine 264–alanine 287 and isoleucine 288–asparagine 316. K(+) is bound at residue tyrosine 283. Topologically, residues asparagine 317–glutamine 433 are extracellular. A disulfide bond links cysteine 375 and cysteine 390. N-linked (GlcNAc...) asparagine glycosylation is found at asparagine 379, asparagine 398, asparagine 411, and asparagine 417. An intrachain disulfide couples cysteine 410 to cysteine 420. The chain crosses the membrane as a helical span at residues glycine 434 to lysine 454. Positions 443, 444, and 446 each coordinate K(+). Isoleucine 443 and threonine 444 together coordinate chloride. The chloride site is built by leucine 447 and tryptophan 448. At glycine 455–lysine 464 the chain is on the cytoplasmic side. The helical transmembrane segment at serine 465–leucine 487 threads the bilayer. Over leucine 488–isoleucine 518 the chain is Extracellular. Threonine 497 contacts K(+). A helical membrane pass occupies residues glycine 519–valine 545. Residues valine 546–serine 568 lie on the Cytoplasmic side of the membrane. The next 2 helical transmembrane spans lie at proline 569–threonine 589 and glycine 590–histidine 612. Position 603 (isoleucine 603) interacts with chloride. Residues serine 613–isoleucine 629 are Cytoplasmic-facing. Helical transmembrane passes span alanine 630 to phenylalanine 649 and phenylalanine 650 to threonine 665. Chloride is bound at residue tyrosine 654. Residues leucine 666–serine 1150 are Cytoplasmic-facing. Positions alanine 682–cysteine 691 are scissor helix. Phosphoserine is present on serine 736. Threonine 778 bears the Phosphothreonine mark. The residue at position 981 (serine 981) is a Phosphoserine. Threonine 991 carries the phosphothreonine modification. Residues serine 1023, serine 1029, and serine 1032 each carry the phosphoserine modification. Threonine 1048 bears the Phosphothreonine mark. Tyrosine 1121 bears the Phosphotyrosine mark.

The protein belongs to the SLC12A transporter family. K/Cl co-transporter subfamily. As to quaternary structure, homodimer; adopts a domain-swap conformation at the scissor helices connecting the transmembrane domain and C-terminal domain. Heterodimer with K-Cl cotransporter SLC12A5. Interacts (via C-terminus) with CKB; the interaction may be required for potassium-chloride cotransport activity. Phosphorylated, phosphorylation regulates transporter activity. Phosphorylated at Thr-991 and Thr-1048 by OXSR1/OSR1 and STK39/SPAK downstream of WNK kinases (WNK1, WNK2, WNK3 or WNK4), inhibiting the potassium-chloride cotransport activity. Post-translationally, N-glycosylated. As to expression, expressed in hippocampus and corpus callosum (at protein level). Highly expressed throughout the brain and detected at lower levels in kidney. Highly expressed in highly myelinated white matter of the brain, but not in gray matter. Detected in the corpus callosum, in packed cell layers of the hippocampus and in Purkinje neurons within the cerebellum. Highly expressed in white matter in the spinal cord, but not in dorsal root ganglia or sciatic nerve. Colocalizes with the oligodendrocyte marker CNP. Expressed in hippocampus in CA1, and to a lesser extent CA3 pyramidal cells. Also expressed in cortex, mostly in large neurons and in the large cerebellar Purkinje cells. Highly expressed in kidney, but not detected in brain.

It localises to the cell membrane. The protein resides in the basolateral cell membrane. It catalyses the reaction K(+)(in) + chloride(in) = K(+)(out) + chloride(out). Inhibited following phosphorylation by OXSR1/OSR1 and STK39/SPAK: phosphorylation takes place downstream of WNK kinases (WNK1, WNK2, WNK3 or WNK4) in response to hyperosmotic stress and subsequent cell shrinkage. Its function is as follows. Mediates electroneutral potassium-chloride cotransport when activated by cell swelling. May contribute to cell volume homeostasis in single cells. Functionally, mediates electroneutral potassium-chloride cotransport when activated by cell swelling. May contribute to cell volume homeostasis in single cells. The chain is Solute carrier family 12 member 6 (Slc12a6) from Mus musculus (Mouse).